We begin with the raw amino-acid sequence, 465 residues long: Sushi repeat-containing protein SRPX2 (465 aa).

The signal sequence occupies residues 1–23; it reads MAIQLTRRGALSLLLFLTPAVMP. Sushi domains lie at 69 to 119, 120 to 178, and 262 to 321; these read ATCY…YCRQ, MRCH…VCVD, and RRCP…VCVP. 4 cysteine pairs are disulfide-bonded: cysteine 71–cysteine 105, cysteine 91–cysteine 117, cysteine 122–cysteine 163, and cysteine 149–cysteine 176. An HYR domain is found at 177–261; sequence VDIDPPKIRC…SCKFIVKVQV (85 aa). 2 disulfide bridges follow: cysteine 264-cysteine 306 and cysteine 292-cysteine 319.

In terms of assembly, forms homooligomers. Interacts with PLAUR (via the UPAR/Ly6 domains), ADAMTS4 and CTSB. Interacts with HGF; the interaction increases the mitogenic activity of HGF. Contains chondroitin sulfate chains.

The protein resides in the secreted. Its subcellular location is the cytoplasm. It is found in the cell surface. The protein localises to the synapse. Its function is as follows. Acts as a ligand for the urokinase plasminogen activator surface receptor. Plays a role in angiogenesis by inducing endothelial cell migration and the formation of vascular network (cords). Involved in cellular migration and adhesion. Increases the phosphorylation levels of FAK. Interacts with and increases the mitogenic activity of HGF. Promotes synapse formation. In Bos taurus (Bovine), this protein is Sushi repeat-containing protein SRPX2 (SRPX2).